We begin with the raw amino-acid sequence, 549 residues long: Protein wntless homolog (549 aa).

The N-terminal stretch at 1-34 (MAGGAVIENLSNRKLFVIFAGLLVIQIMFFLIGA) is a signal peptide. Residues 36-236 (YAPSPSSYME…RLIEIHQNGG (201 aa)) are Lumenal-facing. A helical membrane pass occupies residues 237-257 (FTLVWLWTKTFMTPVVAICLW). Over 258 to 275 (WYYNRINQLARNPLLLER) the chain is Cytoplasmic. The chain crosses the membrane as a helical span at residues 276–296 (AILLLGLSLVILDFPIEWISL). At 297 to 310 (TYRIPFLLLISDLR) the chain is on the lumenal side. Residues 311–331 (QGLFYTVLFSFWLIFAGEHLI) form a helical membrane-spanning segment. Over 332 to 345 (DDNTRNNLKSYRFN) the chain is Cytoplasmic. A helical transmembrane segment spans residues 346 to 366 (LSFIITASLGLLIYDLIERGI). Residues 367 to 383 (QLYDPFYSVWSSPTGSQ) lie on the Lumenal side of the membrane. A helical transmembrane segment spans residues 384 to 404 (IAYFAIFISAISTVAYFIFLF). Over 405–439 (FKIARVWSTIKSKRSAQIYQTSENRRLKVEGVIYR) the chain is Cytoplasmic. The helical transmembrane segment at 440–460 (FKFLMLFTLLCSAFTIAAYFM) threads the bilayer. The Lumenal portion of the chain corresponds to 461–483 (KQYGEAQLHGDEARDGFLTGSTS). A helical transmembrane segment spans residues 484 to 504 (AFFTGAFGMCNIYVLLLLAMY). The Cytoplasmic portion of the chain corresponds to 505–549 (APSHKHYRGASQLIDENDDDEIMEDPSNQHTESNAMTTFLKPSTD). The interval 524 to 549 (DEIMEDPSNQHTESNAMTTFLKPSTD) is disordered. Polar residues predominate over residues 530 to 549 (PSNQHTESNAMTTFLKPSTD).

Belongs to the wntless family. As to expression, expressed in the tail hypodermis, stomatointestinal muscle, the mesoblast cell M and its descendants, CAN neurons, the developing vulva, the pharynx and the pharyngeal intestinal valve.

Its subcellular location is the cell membrane. It localises to the early endosome membrane. The protein localises to the golgi apparatus membrane. The protein resides in the basal cell membrane. It is found in the late endosome membrane. In terms of biological role, probable sorting receptor which regulates endocytosis and secretion of the wnt ligand egl-20. Recycling of mig-14 from the plasma membrane to the Golgi apparatus by the retromer complex is essential for its function. Its endosomal trafficking is regulated by its association with sorting nexin snx-3 on early endosomes and the mtm-6/mtm-9 myotubularin complex. Required in embryonic development for endoderm specification and the correct positioning and orientation of the mitotic spindles and division planes in blastomere cells. Functions during vulval development, playing a role in vulval precursor cell fate specification. During development, specifically regulates the migration of HSN neurons, the left Q neuroblast (QL) and its descendants and the distal tip cells of the gonads. Positioning of Q neuroblasts may be both dependent and independent of hox gene mab-5. Involved in establishing ALM and PLM neuronal cell polarity. This is Protein wntless homolog from Caenorhabditis elegans.